A 396-amino-acid chain; its full sequence is Chorismate synthase (396 aa).

Arg-41 and Arg-47 together coordinate NADP(+). Residues Arg-130–Ser-132, Gly-298, Lys-313–Thr-317, and Arg-339 each bind FMN.

Belongs to the chorismate synthase family. Homotetramer. FMNH2 serves as cofactor.

It carries out the reaction 5-O-(1-carboxyvinyl)-3-phosphoshikimate = chorismate + phosphate. It functions in the pathway metabolic intermediate biosynthesis; chorismate biosynthesis; chorismate from D-erythrose 4-phosphate and phosphoenolpyruvate: step 7/7. In terms of biological role, catalyzes the anti-1,4-elimination of the C-3 phosphate and the C-6 proR hydrogen from 5-enolpyruvylshikimate-3-phosphate (EPSP) to yield chorismate, which is the branch point compound that serves as the starting substrate for the three terminal pathways of aromatic amino acid biosynthesis. This reaction introduces a second double bond into the aromatic ring system. This is Chorismate synthase from Syntrophomonas wolfei subsp. wolfei (strain DSM 2245B / Goettingen).